The primary structure comprises 84 residues: Succinate dehydrogenase membrane anchor subunit (84 aa).

Topologically, residues 1 to 3 are mitochondrial matrix; sequence MIT. A helical membrane pass occupies residues 4-24; it reads FQWLIVRVVALFISLTILIDI. The Mitochondrial intermembrane portion of the chain corresponds to 25–31; sequence EMFVVML. Residues 32–52 form a helical membrane-spanning segment; that stretch reads SFLIIHISIGLKAIIHDYIHF. H37 contributes to the heme binding site. Y49 contributes to the a ubiquinone binding site. The Mitochondrial matrix segment spans residues 53–58; sequence QKIKLM. The helical transmembrane segment at 59–81 threads the bilayer; that stretch reads LLILLRVSAIEISRSFRTFYIII. Residues 82-84 are Mitochondrial intermembrane-facing; the sequence is KNT.

Part of an enzyme complex containing four subunits: a flavoprotein, an iron-sulfur protein, plus two membrane-anchoring proteins. The cofactor is heme.

The protein localises to the mitochondrion inner membrane. The protein operates within carbohydrate metabolism; tricarboxylic acid cycle. Its function is as follows. Membrane-anchoring subunit of succinate dehydrogenase (SDH). In Chondrus crispus (Carrageen Irish moss), this protein is Succinate dehydrogenase membrane anchor subunit (SDH4).